Consider the following 309-residue polypeptide: MKTRSKLAAGFLTLMSVATLAACSGKTSNGTNVVTMKGDTITVSDFYDQVKTSKAAQQSMLTLILSRVFDTQYGDKVSDKKVSEAYNKTAKGYGNSFSSALSQAGLTPEGYKQQIRTTMLVEYAVKEAAKKELTEANYKEAYKNYTPETSVQVIKLDAEDKAKSVLKDVKADGADFAKIAKEKTTATDKKVEYKFDSAGTSLPKEVMSAAFKLDKNGVSDVVSTVDSTTYKTSYYIIKVTDKTEKKSDWKSYKNRLKEVILKDKTSDRSFQNKVISKALEKANVKIKDKAFAGILSQYATTSGSSSLKK.

The first 22 residues, 1–22 (MKTRSKLAAGFLTLMSVATLAA), serve as a signal peptide directing secretion. Cys-23 carries the N-palmitoyl cysteine lipid modification. Residue Cys-23 is the site of S-diacylglycerol cysteine attachment. The PpiC domain maps to 146-241 (TPETSVQVIK…TSYYIIKVTD (96 aa)).

It belongs to the PrsA family.

The protein resides in the cell membrane. The catalysed reaction is [protein]-peptidylproline (omega=180) = [protein]-peptidylproline (omega=0). Plays a major role in protein secretion by helping the post-translocational extracellular folding of several secreted proteins. The chain is Foldase protein PrsA from Streptococcus agalactiae serotype III (strain NEM316).